Consider the following 74-residue polypeptide: RNA-binding protein Hfq (74 aa).

One can recognise a Sm domain in the interval 9 to 69 (DQYLNQLRKN…ISTFSPVKNV (61 aa)).

Belongs to the Hfq family. As to quaternary structure, homohexamer.

Functionally, RNA chaperone that binds small regulatory RNA (sRNAs) and mRNAs to facilitate mRNA translational regulation in response to envelope stress, environmental stress and changes in metabolite concentrations. Also binds with high specificity to tRNAs. The chain is RNA-binding protein Hfq from Oceanobacillus iheyensis (strain DSM 14371 / CIP 107618 / JCM 11309 / KCTC 3954 / HTE831).